A 55-amino-acid polypeptide reads, in one-letter code: RESPSSRMECYEQAERYGYGGYGGGRYGGGYGSGRGQPVGQGVERSHDDNRNQPR.

Positions 18-39 are enriched in gly residues; the sequence is GYGGYGGGRYGGGYGSGRGQPV. The tract at residues 18–55 is disordered; the sequence is GYGGYGGGRYGGGYGSGRGQPVGQGVERSHDDNRNQPR. Positions 44–55 are enriched in basic and acidic residues; it reads ERSHDDNRNQPR.

Monomer and homodimer. Might act by homodimer formation.

In terms of biological role, has antibacterial activity against the Gram-negative bacteria Klebsiella sp., Proteus sp., E.coli ATCC 8739 (MIC=72 ug/ml) and K.pneumoniae (MIC=32 ug/ml). Has no activity against the Gram-negative bacterium S.typhimurium or the Gram-positive bacterium S.aureus. Does not have antifungal activity against the human and plant pathogenic fungi F.oxysporum, A.fumigatus and R.solani. The protein is Glycine-rich antimicrobial peptide Pg-AMP of Psidium guajava (Guava).